The primary structure comprises 419 residues: Protein distal antenna-related (419 aa).

One can recognise an HTH psq-type domain in the interval 15-66 (TRGKRPLRNLTPNDKVRAIQRIHNGETKASVSRDIGVPESTLRGWCKNEQKL). Positions 42-62 (KASVSRDIGVPESTLRGWCKN) form a DNA-binding region, H-T-H motif. Disordered regions lie at residues 333–359 (QPGG…PDLE) and 378–419 (EASN…DAEQ).

As to quaternary structure, interacts with itself, dan, ey and dac to form a complex (or complexes) containing the RD factors. As to expression, coexpressed with dan in the presumptive distal antenna, but not in the leg imaginal disk. Both proteins are also expressed in the brain and the eye region of the eye-antenna disk. First detected in early L3 eye disks in cells surrounding the newly initiated morphogenetic furrow. Highly expressed in evenly spaced clusters of cells anterior to the furrow, lower levels within and posterior to the furrow.

Its subcellular location is the nucleus. Probable transcription factor with a role in the retinal determination (RD) network. Regulates ato expression and is required for normal R8 induction and differentiation. Danr appears to repress Dan expression, but Dan is required for Danr expression anterior to the morphogenetic furrow (MF). Dan and Danr lie downstream of so and require dac function for highest levels of expression. Contributes to differentiation of antenna-specific characteristics; effector gene that acts downstream of homothorax (hth), Distal-less (Dll), cut (ct) and spineless (ss) genes to control differentiation of distal antennal structures. The protein is Protein distal antenna-related of Drosophila melanogaster (Fruit fly).